A 349-amino-acid chain; its full sequence is Putative methylesterase 12, chloroplastic (349 aa).

Residues 1 to 77 (MGNRVICMKK…GSTSSRRGTL (77 aa)) constitute a chloroplast transit peptide. The segment at 61–80 (GSMSRRIGSTSSRRGTLSDS) is disordered. S173 serves as the catalytic Acyl-ester intermediate. Catalysis depends on charge relay system residues D300 and H328.

The protein belongs to the AB hydrolase superfamily. Methylesterase family.

The protein resides in the plastid. It is found in the chloroplast. Putative methylesterase. The chain is Putative methylesterase 12, chloroplastic from Arabidopsis thaliana (Mouse-ear cress).